Reading from the N-terminus, the 370-residue chain is Tyrosyl-DNA phosphodiesterase 2 (370 aa).

Met-1 carries the N-acetylmethionine modification. The disordered stretch occupies residues 1 to 32 (MASGSSSDAAEPAGPAGRAASAPEAAQAEEDR). Positions 9 to 26 (AAEPAGPAGRAASAPEAA) are enriched in low complexity. Lys-34 is covalently cross-linked (Glycyl lysine isopeptide (Lys-Gly) (interchain with G-Cter in SUMO2)). Phosphothreonine; by ACVR1B is present on Thr-99. The interaction with 5' end of substrate DNA stretch occupies residues 130 to 134 (NIDGL). 2 residues coordinate Mg(2+): Asp-132 and Glu-162. The tract at residues 236–241 (HLESTR) is interaction with 5' end of substrate DNA. Asp-272 serves as the catalytic Proton donor/acceptor. 2 interaction with 5' end of substrate DNA regions span residues 274–276 (NLR) and 315–321 (LRIPAAY).

The protein belongs to the CCR4/nocturin family. In terms of assembly, interacts with TRAF2, TRAF3, TRAF5, TRAF6, TNFRSF8/CD30, TNFRSF5/CD40, TNFRSF1B/TNF-R75, ETS1, ETS2, FLI1, SMAD3 and ACVR1B/ALK4. Requires Mg(2+) as cofactor. Mn(2+) is required as a cofactor. In terms of processing, ubiquitinated by TRAF6. In terms of tissue distribution, widely expressed. Expressed in whole brain, cerebellum, quiescent cortical astrocytes and cerebellar granule neurons.

Its subcellular location is the nucleus. It localises to the PML body. The protein resides in the nucleolus. It is found in the cytoplasm. In terms of biological role, DNA repair enzyme that can remove a variety of covalent adducts from DNA through hydrolysis of a 5'-phosphodiester bond, giving rise to DNA with a free 5' phosphate. Catalyzes the hydrolysis of dead-end complexes between DNA and the topoisomerase 2 (TOP2) active site tyrosine residue. The 5'-tyrosyl DNA phosphodiesterase activity can enable the repair of TOP2-induced DNA double-strand breaks/DSBs without the need for nuclease activity, creating a 'clean' DSB with 5'-phosphate termini that are ready for ligation. Thereby, protects the transcription of many genes involved in neurological development and maintenance from the abortive activity of TOP2. Hydrolyzes 5'-phosphoglycolates on protruding 5' ends on DSBs due to DNA damage by radiation and free radicals. Has preference for single-stranded DNA or duplex DNA with a 4 base pair overhang as substrate. Also has 3'-tyrosyl DNA phosphodiesterase activity, but less efficiently and much slower than TDP1. Constitutes the major if not only 5'-tyrosyl-DNA phosphodiesterase in cells. Also acts as an adapter by participating in the specific activation of MAP3K7/TAK1 in response to TGF-beta: associates with components of the TGF-beta receptor-TRAF6-TAK1 signaling module and promotes their ubiquitination dependent complex formation. Involved in non-canonical TGF-beta induced signaling routes. May also act as a negative regulator of ETS1 and may inhibit NF-kappa-B activation. Acts as a regulator of ribosome biogenesis following stress. The protein is Tyrosyl-DNA phosphodiesterase 2 (Tdp2) of Mus musculus (Mouse).